A 202-amino-acid chain; its full sequence is Molybdenum cofactor guanylyltransferase (202 aa).

Residues Leu9–Gly11, Lys22, Asp70, and Asp96 each bind GTP. Mg(2+) is bound at residue Asp96.

This sequence belongs to the MobA family. Monomer. The cofactor is Mg(2+).

The protein localises to the cytoplasm. The catalysed reaction is Mo-molybdopterin + GTP + H(+) = Mo-molybdopterin guanine dinucleotide + diphosphate. Functionally, transfers a GMP moiety from GTP to Mo-molybdopterin (Mo-MPT) cofactor (Moco or molybdenum cofactor) to form Mo-molybdopterin guanine dinucleotide (Mo-MGD) cofactor. The polypeptide is Molybdenum cofactor guanylyltransferase (Desulfosudis oleivorans (strain DSM 6200 / JCM 39069 / Hxd3) (Desulfococcus oleovorans)).